Reading from the N-terminus, the 726-residue chain is Probable cadmium-transporting ATPase (726 aa).

The 64-residue stretch at 11–74 (DKQVYRVEGF…AGAFENLKVF (64 aa)) folds into the HMA domain. Positions 22 and 25 each coordinate Cd(2+). Helical transmembrane passes span 105–125 (STLL…FVNG), 129–149 (LVTS…LFKV), 163–179 (TLMT…GEWA), 335–355 (IIMV…GGSW), and 363–383 (LAVL…ISIV). The 4-aspartylphosphate intermediate role is filled by D414. Helical transmembrane passes span 671–693 (LNII…LLVI) and 698–720 (TLWI…SLRL).

This sequence belongs to the cation transport ATPase (P-type) (TC 3.A.3) family. Type IB subfamily.

Its subcellular location is the cell membrane. It catalyses the reaction Cd(2+)(in) + ATP + H2O = Cd(2+)(out) + ADP + phosphate + H(+). Its function is as follows. Couples the hydrolysis of ATP with the export of cadmium. The polypeptide is Probable cadmium-transporting ATPase (cadA) (Staphylococcus aureus (strain MRSA252)).